The following is a 78-amino-acid chain: Beta-defensin 105A (78 aa).

The first 27 residues, 1-27 (MALIKKTFFFLFAMFFILVQLSSGCQA), serve as a signal peptide directing secretion. 3 disulfides stabilise this stretch: Cys43–Cys74, Cys53–Cys67, and Cys57–Cys73.

It belongs to the beta-defensin family.

The protein resides in the secreted. In terms of biological role, has antimicrobial activity. The polypeptide is Beta-defensin 105A (DEFB105A) (Pan troglodytes (Chimpanzee)).